The chain runs to 121 residues: Large ribosomal subunit protein uL14 (121 aa).

The protein belongs to the universal ribosomal protein uL14 family. As to quaternary structure, part of the 50S ribosomal subunit. Forms a cluster with proteins L3 and L19. In the 70S ribosome, L14 and L19 interact and together make contacts with the 16S rRNA in bridges B5 and B8.

In terms of biological role, binds to 23S rRNA. Forms part of two intersubunit bridges in the 70S ribosome. The sequence is that of Large ribosomal subunit protein uL14 from Prochlorococcus marinus (strain NATL1A).